Reading from the N-terminus, the 1202-residue chain is PAN2-PAN3 deadenylation complex catalytic subunit PAN2 (1202 aa).

4 WD repeats span residues 153–193 (DENE…QKYA), 195–231 (ETPG…VEHE), 244–280 (VHGN…AITP), and 328–367 (PVGP…SFNP). The interval 368–485 (YSRETEFALP…VGREEEPHLH (118 aa)) is linker. In terms of domain architecture, USP spans 486–924 (MVSKKYRKVT…VPAILYYVKR (439 aa)). Ser-791 is subject to Phosphoserine. The region spanning 975–1147 (VGLDAEFVTL…EDARTALQLY (173 aa)) is the Exonuclease domain. Residues Asp-978, Glu-980, Asp-1087, and Asp-1139 each contribute to the a divalent metal cation site. The residue at position 1189 (Ser-1189) is a Phosphoserine.

The protein belongs to the peptidase C19 family. PAN2 subfamily. As to quaternary structure, forms a heterotrimer with an asymmetric homodimer of the regulatory subunit PAN3 to form the poly(A)-nuclease (PAN) deadenylation complex. Interacts with PAN3 isoform 1/Pan3L and isoform 3/Pan3S. Interacts with ZFP36. A divalent metal cation serves as cofactor.

Its subcellular location is the cytoplasm. The protein localises to the P-body. The protein resides in the nucleus. The enzyme catalyses Exonucleolytic cleavage of poly(A) to 5'-AMP.. Positively regulated by the regulatory subunit PAN3. Functionally, catalytic subunit of the poly(A)-nuclease (PAN) deadenylation complex, one of two cytoplasmic mRNA deadenylases involved in general and miRNA-mediated mRNA turnover. PAN specifically shortens poly(A) tails of RNA and the activity is stimulated by poly(A)-binding protein (PABP). PAN deadenylation is followed by rapid degradation of the shortened mRNA tails by the CCR4-NOT complex. Deadenylated mRNAs are then degraded by two alternative mechanisms, namely exosome-mediated 3'-5' exonucleolytic degradation, or deadenylation-dependent mRNA decaping and subsequent 5'-3' exonucleolytic degradation by XRN1. Also acts as an important regulator of the HIF1A-mediated hypoxic response. Required for HIF1A mRNA stability independent of poly(A) tail length regulation. This Homo sapiens (Human) protein is PAN2-PAN3 deadenylation complex catalytic subunit PAN2.